The chain runs to 666 residues: Semaphorin-7A (666 aa).

The tract at residues Met1–Pro21 is disordered. An N-terminal signal peptide occupies residues Met1–Ala44. The segment covering Ala9–Pro21 has biased composition (low complexity). Residues Arg53–Leu490 form the Sema domain. Asn105 carries an N-linked (GlcNAc...) asparagine glycan. A disulfide bridge connects residues Cys120 and Cys126. Arg135 carries the post-translational modification Asymmetric dimethylarginine. Residues Cys143 and Cys152 are joined by a disulfide bond. Asn157 and Asn258 each carry an N-linked (GlcNAc...) asparagine glycan. 7 disulfides stabilise this stretch: Cys266-Cys366, Cys291-Cys335, Cys493-Cys511, Cys500-Cys541, Cys503-Cys518, Cys566-Cys613, and Cys587-Cys596. The interval Arg267–Asp269 is interaction with integrins. The Cell attachment site motif lies at Arg267–Asp269. Residue Asn330 is glycosylated (N-linked (GlcNAc...) asparagine). The 86-residue stretch at Pro544–Leu629 folds into the Ig-like C2-type domain. N-linked (GlcNAc...) asparagine glycosylation occurs at Asn602. The GPI-anchor amidated alanine moiety is linked to residue Ala648. The propeptide at Ala649–His666 is removed in mature form.

Belongs to the semaphorin family. In terms of assembly, interacts with ITGA1 and ITGB1. Interacts with PLXNC1. Detected in skin keratinocytes and on endothelial cells from skin blood vessels (at protein level). Expressed in fibroblasts, keratinocytes, melanocytes, placenta, testis, ovary, spleen, brain, spinal cord, lung, heart, adrenal gland, lymph nodes, thymus, intestine and kidney.

Its subcellular location is the cell membrane. Functionally, plays an important role in integrin-mediated signaling and functions both in regulating cell migration and immune responses. Promotes formation of focal adhesion complexes, activation of the protein kinase PTK2/FAK1 and subsequent phosphorylation of MAPK1 and MAPK3. Promotes production of pro-inflammatory cytokines by monocytes and macrophages. Plays an important role in modulating inflammation and T-cell-mediated immune responses. Promotes axon growth in the embryonic olfactory bulb. Promotes attachment, spreading and dendrite outgrowth in melanocytes. This is Semaphorin-7A (SEMA7A) from Homo sapiens (Human).